Reading from the N-terminus, the 318-residue chain is Ubiquitin-conjugating enzyme E2 J1 (318 aa).

At 1–282 (METRYNLKSP…QGHQPRDNHT (282 aa)) the chain is on the cytoplasmic side. The UBC core domain maps to 10–160 (PAVKRLMKEA…GCGSAMKDVL (151 aa)). Catalysis depends on Cys91, which acts as the Glycyl thioester intermediate. Phosphoserine; by MAPKAPK2 is present on Ser184. Residues 229-248 (LQNSSAASFHQPTQPVAKNT) show a composition bias toward polar residues. The interval 229–283 (LQNSSAASFHQPTQPVAKNTSMSPRQRRAQQQSQRRLSTSPDVIQGHQPRDNHTD) is disordered. Low complexity predominate over residues 249-268 (SMSPRQRRAQQQSQRRLSTS). Residues Ser266 and Ser268 each carry the phosphoserine modification. The chain crosses the membrane as a helical; Anchor for type IV membrane protein span at residues 283–303 (DHGGSAVLIVILTLALAALIF). At 304–318 (RRIYLANEYIFDFEL) the chain is on the lumenal side.

This sequence belongs to the ubiquitin-conjugating enzyme family. In terms of assembly, component of the HRD1 complex, which comprises at least SYNV1/HRD1, DERL1/2, FAM8A1, HERPUD1/HERP, OS9, SEL1L and UBE2J1. Interacts with E3 ligase RNF26. Interacts with E3 ligase RNF133. Phosphorylated at Ser-184 in a cytosolic stress-dependent manner by MAP kinase p38 MAPKAPK2. Post-translationally, phosphorylated UBE2J1 is rapidly ubiquitinated and subsequently degraded by the proteasome. Expressed in testes.

Its subcellular location is the endoplasmic reticulum membrane. The enzyme catalyses S-ubiquitinyl-[E1 ubiquitin-activating enzyme]-L-cysteine + [E2 ubiquitin-conjugating enzyme]-L-cysteine = [E1 ubiquitin-activating enzyme]-L-cysteine + S-ubiquitinyl-[E2 ubiquitin-conjugating enzyme]-L-cysteine.. It functions in the pathway protein modification; protein ubiquitination. Functionally, catalyzes the covalent attachment of ubiquitin to other proteins. Functions in the selective degradation of misfolded membrane proteins from the endoplasmic reticulum (ERAD) and is essential for cells to recover from ER stress. Plays a role in MAPKAPK2-dependent translational control of TNF-alpha synthesis. Also acts as a platform for perinuclear positioning of the endosomal system by mediating ubiquitination of SQSTM1 through interaction with the E3 ubiquitin-protein ligase RNF26. Plays a role in male fecundity through the interaction with the E3 ubiquitin-protein ligase RNF133. Its function is as follows. (Microbial infection) Promotes Dengue virus RNA replication by negatively regulating IFN-beta signaling and mediating 'Lys-48'-linked ubiquitination on IRF3. This is Ubiquitin-conjugating enzyme E2 J1 from Homo sapiens (Human).